Here is a 633-residue protein sequence, read N- to C-terminus: Extracellular metalloproteinase 3 (633 aa).

A signal peptide spans 1–18; that stretch reads MHGLLLAGLLALPMNVLA. The propeptide occupies 19–246; it reads YPAEQHASNV…VHNVVDYVAS (228 aa). The N-linked (GlcNAc...) asparagine glycan is linked to asparagine 410. Residue histidine 429 participates in Zn(2+) binding. Glutamate 430 is an active-site residue. Zn(2+) is bound at residue histidine 433. Asparagine 480 and asparagine 622 each carry an N-linked (GlcNAc...) asparagine glycan.

This sequence belongs to the peptidase M36 family. Requires Zn(2+) as cofactor.

The protein localises to the secreted. In terms of biological role, secreted metalloproteinase probably acting as a virulence factor. The sequence is that of Extracellular metalloproteinase 3 (MEP3) from Trichophyton rubrum (Athlete's foot fungus).